A 364-amino-acid polypeptide reads, in one-letter code: Threonine-phosphate decarboxylase (364 aa).

O-phospho-L-threonine-binding positions include 8–9, N32, and N157; that span reads HG. Position 216 is an N6-(pyridoxal phosphate)lysine (K216). O-phospho-L-threonine-binding residues include R323 and R337.

Belongs to the class-II pyridoxal-phosphate-dependent aminotransferase family. In terms of assembly, homodimer. Pyridoxal 5'-phosphate is required as a cofactor.

It catalyses the reaction O-phospho-L-threonine + H(+) = (R)-1-aminopropan-2-yl phosphate + CO2. It participates in cofactor biosynthesis; adenosylcobalamin biosynthesis. Functionally, decarboxylates L-threonine-O-3-phosphate to yield (R)-1-amino-2-propanol O-2-phosphate, the precursor for the linkage between the nucleotide loop and the corrin ring in cobalamin. This Salmonella typhimurium (strain LT2 / SGSC1412 / ATCC 700720) protein is Threonine-phosphate decarboxylase (cobD).